The sequence spans 82 residues: Large ribosomal subunit protein eL14 (82 aa).

The protein belongs to the eukaryotic ribosomal protein eL14 family.

The sequence is that of Large ribosomal subunit protein eL14 from Pyrococcus abyssi (strain GE5 / Orsay).